A 251-amino-acid chain; its full sequence is S-acyl fatty acid synthase thioesterase, medium chain (251 aa).

Catalysis depends on residues Ser90 and His226.

This sequence belongs to the thioesterase family.

It catalyses the reaction (9Z)-octadecenoyl-[ACP] + H2O = (9Z)-octadecenoate + holo-[ACP] + H(+). In fatty acid biosynthesis chain termination and release of the free fatty acid product is achieved by hydrolysis of the thio ester by a thioesterase I, a component of the fatty acid synthetase complex. The chain length of the released fatty acid is usually C16. However, in the mammary glands of non-ruminant mammals, and in the uropygial gland of certain waterfowl there exists a second thioesterase which releases medium-chain length fatty acids (C8 to C2). The sequence is that of S-acyl fatty acid synthase thioesterase, medium chain from Anas platyrhynchos (Mallard).